The following is a 149-amino-acid chain: Vesicle-associated protein 3-1 (149 aa).

An N-acetylmethionine modification is found at methionine 1. Serine 2 is modified (N-acetylserine; in Vesicle-associated protein 3-1, N-terminally processed). The MSP domain occupies 6 to 126 (LLEIEPMYLQ…EETKLRVTYV (121 aa)).

It belongs to the VAMP-associated protein (VAP) (TC 9.B.17) family.

Functionally, may play a role in vesicle trafficking. This Arabidopsis thaliana (Mouse-ear cress) protein is Vesicle-associated protein 3-1 (PVA31).